The chain runs to 123 residues: Small ribosomal subunit protein uS13 (123 aa).

Positions 93-123 are disordered; the sequence is RRNLPVRGQKTKTNARTRKGPKRAIGGKKKK.

The protein belongs to the universal ribosomal protein uS13 family. Part of the 30S ribosomal subunit. Forms a loose heterodimer with protein S19. Forms two bridges to the 50S subunit in the 70S ribosome.

Located at the top of the head of the 30S subunit, it contacts several helices of the 16S rRNA. In the 70S ribosome it contacts the 23S rRNA (bridge B1a) and protein L5 of the 50S subunit (bridge B1b), connecting the 2 subunits; these bridges are implicated in subunit movement. Contacts the tRNAs in the A and P-sites. The sequence is that of Small ribosomal subunit protein uS13 from Clostridium botulinum (strain Loch Maree / Type A3).